A 157-amino-acid chain; its full sequence is F-box protein SNE (157 aa).

One can recognise an F-box domain in the interval 24-70; the sequence is PVFSINDHHDVLVEILRRLDGSSLCSAACVCRLWSAVARNDSIWEEL.

Part of a SCF (ASK-cullin-F-box) protein ligase complex. Interacts directly with SKP1A and SKP1B. In terms of tissue distribution, highly expressed in flowers and at much lower level in seedlings, rosette leaves and green siliques.

The protein resides in the nucleus. The protein operates within protein modification; protein ubiquitination. In terms of biological role, essential component of a SCF-type E3 ligase complex that positively regulates the gibberellin signaling pathway. Upon gibberellin treatment, such complex probably mediates the ubiquitination and subsequent degradation of DELLA proteins (GAI, RGA and RGL2), some repressors of the gibberellin pathway, leading to activate the pathway. Can partially complement the absence of GID2/SLY1. In Arabidopsis thaliana (Mouse-ear cress), this protein is F-box protein SNE (SNE).